Here is a 103-residue protein sequence, read N- to C-terminus: Acyl carrier protein homolog (103 aa).

Residues 3–87 enclose the Carrier domain; the sequence is ELTSEIKKEI…ETLEKVVQTT (85 aa). At S45 the chain carries O-(pantetheine 4'-phosphoryl)serine.

In terms of processing, 4'-phosphopantetheine is transferred from CoA to a specific serine of the apo-ACP-like protein.

It localises to the cytoplasm. Acyl carrier protein. This is Acyl carrier protein homolog from Clostridium acetobutylicum (strain ATCC 824 / DSM 792 / JCM 1419 / IAM 19013 / LMG 5710 / NBRC 13948 / NRRL B-527 / VKM B-1787 / 2291 / W).